A 192-amino-acid polypeptide reads, in one-letter code: GTP cyclohydrolase 1 (192 aa).

The Zn(2+) site is built by Cys-76, His-79, and Cys-148.

The protein belongs to the GTP cyclohydrolase I family. In terms of assembly, toroid-shaped homodecamer, composed of two pentamers of five dimers.

It catalyses the reaction GTP + H2O = 7,8-dihydroneopterin 3'-triphosphate + formate + H(+). The protein operates within cofactor biosynthesis; 7,8-dihydroneopterin triphosphate biosynthesis; 7,8-dihydroneopterin triphosphate from GTP: step 1/1. The polypeptide is GTP cyclohydrolase 1 (Carboxydothermus hydrogenoformans (strain ATCC BAA-161 / DSM 6008 / Z-2901)).